The chain runs to 270 residues: MSGQVRVAIVGAGGRMGRTLIESAYHQEHIRLGAAIERPGSSLVGVDAGELAGVGKLNIMIMDSLDYATDDFDVLIDFTAPEASIVHLDWCVRHKKAMVIGTTGFNHAQKEQINAFAEQTPVVMAPNMSVGVNLMWKLLELAAEVMGDYTDIEIIEGHHRYKKDAPSGTALKMGEVIAKTLGRDLEKCAVYGREGITGERDRETIGFATVRAGDLVGEHTAMFADIGERLEITHKASSRMTFANGAMRAAHWLVEQKPGLYDMQQVLGLN.

NAD(+) is bound by residues 11–16 (GAGGRM) and Glu-37. Arg-38 serves as a coordination point for NADP(+). Residues 101-103 (GTT) and 125-128 (APNM) contribute to the NAD(+) site. His-158 functions as the Proton donor/acceptor in the catalytic mechanism. A (S)-2,3,4,5-tetrahydrodipicolinate-binding site is contributed by His-159. Lys-162 (proton donor) is an active-site residue. 168 to 169 (GT) lines the (S)-2,3,4,5-tetrahydrodipicolinate pocket.

This sequence belongs to the DapB family.

The protein resides in the cytoplasm. It catalyses the reaction (S)-2,3,4,5-tetrahydrodipicolinate + NAD(+) + H2O = (2S,4S)-4-hydroxy-2,3,4,5-tetrahydrodipicolinate + NADH + H(+). It carries out the reaction (S)-2,3,4,5-tetrahydrodipicolinate + NADP(+) + H2O = (2S,4S)-4-hydroxy-2,3,4,5-tetrahydrodipicolinate + NADPH + H(+). Its pathway is amino-acid biosynthesis; L-lysine biosynthesis via DAP pathway; (S)-tetrahydrodipicolinate from L-aspartate: step 4/4. Its function is as follows. Catalyzes the conversion of 4-hydroxy-tetrahydrodipicolinate (HTPA) to tetrahydrodipicolinate. The polypeptide is 4-hydroxy-tetrahydrodipicolinate reductase (Shewanella oneidensis (strain ATCC 700550 / JCM 31522 / CIP 106686 / LMG 19005 / NCIMB 14063 / MR-1)).